A 298-amino-acid chain; its full sequence is Dihydrodipicolinate reductase-like protein CRR1, chloroplastic (298 aa).

The N-terminal 25 residues, 1–25 (MAAVNCHFFQLSRHLKPSRPSFSCS), are a transit peptide targeting the chloroplast. 160 to 163 (APTL) is a binding site for NAD(+).

Belongs to the DapB family. Expressed specifically in leaves.

Its subcellular location is the plastid. It is found in the chloroplast stroma. Its function is as follows. Dihydrodipicolinate reductase (DHPR)-like protein that may not function as DHPR in lysine biosynthesis. Required for both formation and activity of the chloroplast NAD(P)H dehydrogenase (NDH) complex of the photosynthetic electron transport chain. May function in assembly or stabilization of the NDH complex. This is Dihydrodipicolinate reductase-like protein CRR1, chloroplastic from Arabidopsis thaliana (Mouse-ear cress).